Reading from the N-terminus, the 215-residue chain is Ribose-5-phosphate isomerase A (215 aa).

Substrate is bound by residues 26 to 29 (TGST), 79 to 82 (DGAD), and 92 to 95 (KGGG). Residue glutamate 101 is the Proton acceptor of the active site. Lysine 119 is a substrate binding site.

This sequence belongs to the ribose 5-phosphate isomerase family. As to quaternary structure, homodimer.

It carries out the reaction aldehydo-D-ribose 5-phosphate = D-ribulose 5-phosphate. Its pathway is carbohydrate degradation; pentose phosphate pathway; D-ribose 5-phosphate from D-ribulose 5-phosphate (non-oxidative stage): step 1/1. In terms of biological role, catalyzes the reversible conversion of ribose-5-phosphate to ribulose 5-phosphate. The polypeptide is Ribose-5-phosphate isomerase A (Xylella fastidiosa (strain Temecula1 / ATCC 700964)).